Consider the following 523-residue polypeptide: BTB/POZ domain-containing protein 3 (523 aa).

The ANK repeat unit spans residues 85–114 (FDYSPLVLASLCGHEPVVKFLLENGALCER). BTB domains lie at 167–223 (TDIV…RYLY) and 306–373 (HDAY…DIAP).

Interacts with cul3. Post-translationally, ubiquitinated and targeted for cul3-dependent degradation.

The protein localises to the cytoplasm. It participates in protein modification; protein ubiquitination. Its function is as follows. Probable substrate-specific adapter of an E3 ubiquitin-protein ligase complex which mediates the ubiquitination and subsequent proteasomal degradation of target proteins. This is BTB/POZ domain-containing protein 3 (btb3) from Schizosaccharomyces pombe (strain 972 / ATCC 24843) (Fission yeast).